Consider the following 246-residue polypeptide: 1-(5-phosphoribosyl)-5-[(5-phosphoribosylamino)methylideneamino] imidazole-4-carboxamide isomerase (246 aa).

The active-site Proton acceptor is Asp8. The Proton donor role is filled by Asp130.

The protein belongs to the HisA/HisF family.

Its subcellular location is the cytoplasm. It catalyses the reaction 1-(5-phospho-beta-D-ribosyl)-5-[(5-phospho-beta-D-ribosylamino)methylideneamino]imidazole-4-carboxamide = 5-[(5-phospho-1-deoxy-D-ribulos-1-ylimino)methylamino]-1-(5-phospho-beta-D-ribosyl)imidazole-4-carboxamide. It functions in the pathway amino-acid biosynthesis; L-histidine biosynthesis; L-histidine from 5-phospho-alpha-D-ribose 1-diphosphate: step 4/9. This chain is 1-(5-phosphoribosyl)-5-[(5-phosphoribosylamino)methylideneamino] imidazole-4-carboxamide isomerase, found in Shigella sonnei (strain Ss046).